The following is a 61-amino-acid chain: Large ribosomal subunit protein uL30 (61 aa).

This sequence belongs to the universal ribosomal protein uL30 family. Part of the 50S ribosomal subunit.

The chain is Large ribosomal subunit protein uL30 from Mycobacterium sp. (strain KMS).